A 188-amino-acid chain; its full sequence is NADH-quinone oxidoreductase subunit I (188 aa).

4Fe-4S ferredoxin-type domains are found at residues 44-74 and 90-119; these read LNRY…VEGA and QVYQ…MTNE. [4Fe-4S] cluster is bound by residues Cys54, Cys57, Cys60, Cys64, Cys99, Cys102, Cys105, and Cys109. The disordered stretch occupies residues 167-188; that stretch reads TGGAAAAAQDESEVDDTAGDRP. A compositionally biased stretch (acidic residues) spans 176–188; it reads DESEVDDTAGDRP.

The protein belongs to the complex I 23 kDa subunit family. NDH-1 is composed of 14 different subunits. Subunits NuoA, H, J, K, L, M, N constitute the membrane sector of the complex. [4Fe-4S] cluster serves as cofactor.

It is found in the cell membrane. It catalyses the reaction a quinone + NADH + 5 H(+)(in) = a quinol + NAD(+) + 4 H(+)(out). Functionally, NDH-1 shuttles electrons from NADH, via FMN and iron-sulfur (Fe-S) centers, to quinones in the respiratory chain. The immediate electron acceptor for the enzyme in this species is believed to be ubiquinone. Couples the redox reaction to proton translocation (for every two electrons transferred, four hydrogen ions are translocated across the cytoplasmic membrane), and thus conserves the redox energy in a proton gradient. This Rhodococcus jostii (strain RHA1) protein is NADH-quinone oxidoreductase subunit I.